The following is a 78-amino-acid chain: MVKTITISDDVYNELLRIKGNKSFSEVLRELLKERKGNKEVLKRIFGILSEEEYQEVKKRLKELEGEFEKWEQSLTQM.

It belongs to the UPF0330 family.

In terms of biological role, possibly the antitoxin component of a type II toxin-antitoxin (TA) system. The chain is Putative antitoxin PF1222 from Pyrococcus furiosus (strain ATCC 43587 / DSM 3638 / JCM 8422 / Vc1).